Here is a 430-residue protein sequence, read N- to C-terminus: MSDPKLKPVEDALVTVAKSSQIQLAKDDTSGGTIVGRLLQCQYSKTHKFWETQPVEQFKDIQDTSLPEGPIEPATLVSEVKQEPYNLLGQFEWTICDMNSDDMCLEMYNFLKENSPDDQQIKYEYSKEYLRWALCPPGYYQSWHIGVRVKTSKKLIAFICGRPTRIRVRDEVVKMAKVNSLCVHKKLRSKGLAPLMIKELTRRVKLQNIWQAAYTSSHILSRPVTTSRDWVRMLNPKKLIDVGLTRLRDRMTMSRTVKLYKLPDAPITPGFREMERRDVPAVTALLRNYLSQFAVATDFDDNDVKHWLLPRENIVYSYVVVSPETHDVTDFCSFCNSSITIPGNRKYTTLECAYACCNVATLTSLSQLVNDALIVSKQKGFDVFYASDVMQNESFLKELRFYPLCRQSHYYLYNYRLRNALKPSELGLIL.

Tetradecanoyl-CoA-binding positions include 47 to 50 (HKFW), 181 to 183 (LCV), and 189 to 193 (SKGLA). Leu430 serves as the catalytic Proton acceptor; via carboxylate.

The protein belongs to the NMT family.

It carries out the reaction N-terminal glycyl-[protein] + tetradecanoyl-CoA = N-tetradecanoylglycyl-[protein] + CoA + H(+). In terms of biological role, may add a myristoyl group to the N-terminal glycine residue of certain cellular proteins. The sequence is that of Putative glycylpeptide N-tetradecanoyltransferase 2 (NMT2) from Arabidopsis thaliana (Mouse-ear cress).